Here is a 204-residue protein sequence, read N- to C-terminus: Altered inheritance of mitochondria protein 20 (204 aa).

Residues 6–26 (VAVGTAVGIPIAVGVIIALIF) traverse the membrane as a helical segment.

It belongs to the SKG1 family.

The protein localises to the vacuole membrane. Its function is as follows. Involved in cell cycle progression and surviving DNA damage. The sequence is that of Altered inheritance of mitochondria protein 20 (AIM20) from Saccharomyces cerevisiae (strain JAY291) (Baker's yeast).